We begin with the raw amino-acid sequence, 412 residues long: Adenosine receptor A2a (412 aa).

Topologically, residues 1-7 (MPTVGSL) are extracellular. Residues 8 to 32 (VYIMVELAIALLAILGNMLVCWAVW) traverse the membrane as a helical segment. The Cytoplasmic segment spans residues 33–42 (LNSNLQNVTN). The chain crosses the membrane as a helical span at residues 43-66 (YFVVSLAAADIAVGVLAIPFAITI). Residues 67–77 (STGFCAACHGC) are Extracellular-facing. Intrachain disulfides connect cysteine 71–cysteine 159, cysteine 74–cysteine 146, and cysteine 77–cysteine 166. A helical transmembrane segment spans residues 78–100 (LFIACFVLVLTQSSIFSLLAIAI). At 101-120 (DRYIAIRIPLRYNGLVTGTR) the chain is on the cytoplasmic side. A helical transmembrane segment spans residues 121-143 (AKGVIAVCWVLSFAIGLTPMLGW). Over 144–173 (NNCHHWGEGENQSQGCGEGQVACLFEDVVP) the chain is Extracellular. A glycan (N-linked (GlcNAc...) asparagine) is linked at asparagine 154. Residue glutamate 169 coordinates adenosine. A helical transmembrane segment spans residues 174–198 (MNYMVYYNFFACVLVPLLLMLGVYL). Residues 199–234 (RIFLAARRQLKQMETQPLPGERARSTLQKEVHAAKS) are Cytoplasmic-facing. Residues 235 to 258 (LAIIVGLFALCWLPLHIINCFTFF) form a helical membrane-spanning segment. Position 253 (asparagine 253) interacts with adenosine. Cysteine 259 and cysteine 262 are oxidised to a cystine. Residues 259–266 (CPECPHAP) lie on the Extracellular side of the membrane. A helical membrane pass occupies residues 267–290 (LWLMYPAIILSHFNSVVNPFIYAY). Adenosine-binding residues include serine 277 and histidine 278. The Cytoplasmic segment spans residues 291–412 (RIREFRHTFH…PLAQDGAGVS (122 aa)). Positions 368–412 (RASARESPGDTGLPDVELLSHELHGASPESPGLEGPLAQDGAGVS) are disordered.

It belongs to the G-protein coupled receptor 1 family. As to quaternary structure, interacts (via cytoplasmic C-terminal domain) with USP4; the interaction is direct. May interact with DRD4. Interacts with NECAB2. Interacts (via cytoplasmic C-terminal domain) with GAS2L2; interaction enhances receptor-mediated adenylyl cyclase activity. In terms of processing, ubiquitinated. Deubiquitinated by USP4; leading to stabilization and expression at the cell surface.

The protein resides in the cell membrane. Receptor for adenosine. The activity of this receptor is mediated by G proteins which activate adenylyl cyclase. The sequence is that of Adenosine receptor A2a (ADORA2A) from Equus caballus (Horse).